The following is a 276-amino-acid chain: Eukaryotic translation initiation factor 3 subunit G (276 aa).

Serine 148 is subject to Phosphoserine. One can recognise an RRM domain in the interval 195 to 274 (TTLKISQLNS…LILHLEWSKK (80 aa)).

Belongs to the eIF-3 subunit G family. As to quaternary structure, component of the eukaryotic translation initiation factor 3 (eIF-3) complex.

It localises to the cytoplasm. Its function is as follows. RNA-binding component of the eukaryotic translation initiation factor 3 (eIF-3) complex, which is involved in protein synthesis of a specialized repertoire of mRNAs and, together with other initiation factors, stimulates binding of mRNA and methionyl-tRNAi to the 40S ribosome. The eIF-3 complex specifically targets and initiates translation of a subset of mRNAs involved in cell proliferation. This subunit can bind 18S rRNA. The polypeptide is Eukaryotic translation initiation factor 3 subunit G (Debaryomyces hansenii (strain ATCC 36239 / CBS 767 / BCRC 21394 / JCM 1990 / NBRC 0083 / IGC 2968) (Yeast)).